We begin with the raw amino-acid sequence, 78 residues long: Longicornsin (78 aa).

The first 22 residues, 1-22 (MAESTTTCFLLLVTGYVTAVMS), serve as a signal peptide directing secretion. Residues 23-29 (EEAHLRS) constitute a propeptide that is removed on maturation. 3 cysteine pairs are disulfide-bonded: C35/C58, C43/C63, and C47/C65.

As to expression, salivary glands (at protein level).

It localises to the secreted. In terms of biological role, has antibacterial activity against the Gram-positive bacteria S.aureus ATCC2592 (MIC=0.8 ug/ml), S.aureus 6A (MIC=0.8 ug/ml) and S.aureus 15A (MIC=1.6 ug/ml), and against the Gram-negative bacteria E.coli ATCC 25922 (MIC=3.2 ug/ml), E.coli 23A (MIC=6.4 ug/ml), E.coli 27A (MIC=6.4 ug/ml), P.aeruginosa 3A (MIC=3.2 ug/ml), P.aeruginosa 7A (MIC=0.8 ug/ml) and H.pylori NCTC11637 (MIC=6.4 ug/ml). Has antifungal activity against C.albidus ATCC2002 (MIC=25.6 ug/ml). Very low hemolytic activity against rabbit erythrocytes. The chain is Longicornsin from Haemaphysalis longicornis (Bush tick).